The chain runs to 296 residues: UDP-N-acetylenolpyruvoylglucosamine reductase (296 aa).

The 172-residue stretch at Leu-18–Gly-189 folds into the FAD-binding PCMH-type domain. Arg-166 is an active-site residue. Cys-218 (proton donor) is an active-site residue. Glu-289 is an active-site residue.

It belongs to the MurB family. Requires FAD as cofactor.

It is found in the cytoplasm. It catalyses the reaction UDP-N-acetyl-alpha-D-muramate + NADP(+) = UDP-N-acetyl-3-O-(1-carboxyvinyl)-alpha-D-glucosamine + NADPH + H(+). The protein operates within cell wall biogenesis; peptidoglycan biosynthesis. In terms of biological role, cell wall formation. The polypeptide is UDP-N-acetylenolpyruvoylglucosamine reductase (Nitratidesulfovibrio vulgaris (strain ATCC 29579 / DSM 644 / CCUG 34227 / NCIMB 8303 / VKM B-1760 / Hildenborough) (Desulfovibrio vulgaris)).